Reading from the N-terminus, the 98-residue chain is Aspartyl/glutamyl-tRNA(Asn/Gln) amidotransferase subunit C (98 aa).

It belongs to the GatC family. In terms of assembly, heterotrimer of A, B and C subunits.

The catalysed reaction is L-glutamyl-tRNA(Gln) + L-glutamine + ATP + H2O = L-glutaminyl-tRNA(Gln) + L-glutamate + ADP + phosphate + H(+). It carries out the reaction L-aspartyl-tRNA(Asn) + L-glutamine + ATP + H2O = L-asparaginyl-tRNA(Asn) + L-glutamate + ADP + phosphate + 2 H(+). Allows the formation of correctly charged Asn-tRNA(Asn) or Gln-tRNA(Gln) through the transamidation of misacylated Asp-tRNA(Asn) or Glu-tRNA(Gln) in organisms which lack either or both of asparaginyl-tRNA or glutaminyl-tRNA synthetases. The reaction takes place in the presence of glutamine and ATP through an activated phospho-Asp-tRNA(Asn) or phospho-Glu-tRNA(Gln). The chain is Aspartyl/glutamyl-tRNA(Asn/Gln) amidotransferase subunit C from Kocuria rhizophila (strain ATCC 9341 / DSM 348 / NBRC 103217 / DC2201).